We begin with the raw amino-acid sequence, 421 residues long: Glutamate-1-semialdehyde 2,1-aminomutase 1 (421 aa).

K258 bears the N6-(pyridoxal phosphate)lysine mark.

Belongs to the class-III pyridoxal-phosphate-dependent aminotransferase family. HemL subfamily. It depends on pyridoxal 5'-phosphate as a cofactor.

Its subcellular location is the cytoplasm. It catalyses the reaction (S)-4-amino-5-oxopentanoate = 5-aminolevulinate. It participates in porphyrin-containing compound metabolism; protoporphyrin-IX biosynthesis; 5-aminolevulinate from L-glutamyl-tRNA(Glu): step 2/2. This Cenarchaeum symbiosum (strain A) protein is Glutamate-1-semialdehyde 2,1-aminomutase 1.